The sequence spans 537 residues: 2-succinyl-5-enolpyruvyl-6-hydroxy-3-cyclohexene-1-carboxylate synthase (537 aa).

This sequence belongs to the TPP enzyme family. MenD subfamily. In terms of assembly, homodimer. Mg(2+) serves as cofactor. Requires Mn(2+) as cofactor. It depends on thiamine diphosphate as a cofactor.

It carries out the reaction isochorismate + 2-oxoglutarate + H(+) = 5-enolpyruvoyl-6-hydroxy-2-succinyl-cyclohex-3-ene-1-carboxylate + CO2. Its pathway is quinol/quinone metabolism; 1,4-dihydroxy-2-naphthoate biosynthesis; 1,4-dihydroxy-2-naphthoate from chorismate: step 2/7. It functions in the pathway quinol/quinone metabolism; menaquinone biosynthesis. In terms of biological role, catalyzes the thiamine diphosphate-dependent decarboxylation of 2-oxoglutarate and the subsequent addition of the resulting succinic semialdehyde-thiamine pyrophosphate anion to isochorismate to yield 2-succinyl-5-enolpyruvyl-6-hydroxy-3-cyclohexene-1-carboxylate (SEPHCHC). This Desulfotalea psychrophila (strain LSv54 / DSM 12343) protein is 2-succinyl-5-enolpyruvyl-6-hydroxy-3-cyclohexene-1-carboxylate synthase.